The sequence spans 513 residues: ATP synthase subunit alpha (513 aa).

169-176 (GDRQTGKT) serves as a coordination point for ATP.

It belongs to the ATPase alpha/beta chains family. In terms of assembly, F-type ATPases have 2 components, CF(1) - the catalytic core - and CF(0) - the membrane proton channel. CF(1) has five subunits: alpha(3), beta(3), gamma(1), delta(1), epsilon(1). CF(0) has three main subunits: a(1), b(2) and c(9-12). The alpha and beta chains form an alternating ring which encloses part of the gamma chain. CF(1) is attached to CF(0) by a central stalk formed by the gamma and epsilon chains, while a peripheral stalk is formed by the delta and b chains.

The protein resides in the cell inner membrane. It catalyses the reaction ATP + H2O + 4 H(+)(in) = ADP + phosphate + 5 H(+)(out). Functionally, produces ATP from ADP in the presence of a proton gradient across the membrane. The alpha chain is a regulatory subunit. This chain is ATP synthase subunit alpha, found in Aliivibrio fischeri (strain ATCC 700601 / ES114) (Vibrio fischeri).